The primary structure comprises 480 residues: uncharacterized protein (480 aa).

The segment at 1–20 is disordered; sequence MDVKDTGINRSDTPISDQDH.

This is an uncharacterized protein from Arabidopsis thaliana (Mouse-ear cress).